The chain runs to 130 residues: Small ribosomal subunit protein uS11 (130 aa).

Belongs to the universal ribosomal protein uS11 family. Part of the 30S ribosomal subunit. Interacts with proteins S7 and S18. Binds to IF-3.

In terms of biological role, located on the platform of the 30S subunit, it bridges several disparate RNA helices of the 16S rRNA. Forms part of the Shine-Dalgarno cleft in the 70S ribosome. This chain is Small ribosomal subunit protein uS11, found in Rippkaea orientalis (strain PCC 8801 / RF-1) (Cyanothece sp. (strain PCC 8801)).